A 201-amino-acid polypeptide reads, in one-letter code: Urease accessory protein UreG (201 aa).

11-18 (GPVGSGKT) serves as a coordination point for GTP.

The protein belongs to the SIMIBI class G3E GTPase family. UreG subfamily. As to quaternary structure, homodimer. UreD, UreF and UreG form a complex that acts as a GTP-hydrolysis-dependent molecular chaperone, activating the urease apoprotein by helping to assemble the nickel containing metallocenter of UreC. The UreE protein probably delivers the nickel.

It is found in the cytoplasm. In terms of biological role, facilitates the functional incorporation of the urease nickel metallocenter. This process requires GTP hydrolysis, probably effectuated by UreG. This is Urease accessory protein UreG from Synechococcus sp. (strain CC9902).